A 621-amino-acid polypeptide reads, in one-letter code: DnaJ homolog subfamily C member 2 (621 aa).

Position 1 is an N-acetylmethionine (Met-1). Ser-47, Ser-49, Ser-60, and Ser-63 each carry phosphoserine. The region spanning 88 to 161 (DHYAVLGLGH…VKRRAFNSVD (74 aa)) is the J domain. Residues 160 to 250 (VDPTFDNSVP…RDERRWIEKQ (91 aa)) are ZRF1-UBD. Position 183 is a phosphoserine (Ser-183). Disordered stretches follow at residues 294–315 (EKKA…QRQA) and 426–453 (KEEA…GSKH). SANT domains are found at residues 449–511 (NGSK…KLDP) and 549–604 (TDFT…EMVK).

In terms of assembly, component of ribosome-associated complex (RAC), a heterodimer composed of Hsp70/DnaK-type chaperone HSPA14 and Hsp40/DnaJ-type chaperone DNAJC2. Interacts (via ZRF1-UBD region) with ID1. Phosphorylated in M (mitotic) phase.

The protein localises to the nucleus. It is found in the cytoplasm. Its subcellular location is the cytosol. In terms of biological role, acts both as a chaperone in the cytosol and as a chromatin regulator in the nucleus. When cytosolic, acts as a molecular chaperone: component of the ribosome-associated complex (RAC), a complex involved in folding or maintaining nascent polypeptides in a folding-competent state. In the RAC complex, stimulates the ATPase activity of the ribosome-associated pool of Hsp70-type chaperones HSPA14 that bind to the nascent polypeptide chain. When nuclear, mediates the switching from polycomb-repressed genes to an active state: specifically recruited at histone H2A ubiquitinated at 'Lys-119' (H2AK119ub), and promotes the displacement of the polycomb PRC1 complex from chromatin, thereby facilitating transcription activation. The protein is DnaJ homolog subfamily C member 2 (DNAJC2) of Bos taurus (Bovine).